The primary structure comprises 291 residues: 4-hydroxy-tetrahydrodipicolinate synthase (291 aa).

Residue threonine 45 participates in pyruvate binding. Tyrosine 133 functions as the Proton donor/acceptor in the catalytic mechanism. Residue lysine 161 is the Schiff-base intermediate with substrate of the active site. Pyruvate is bound at residue isoleucine 203.

Belongs to the DapA family. In terms of assembly, homotetramer; dimer of dimers.

It localises to the cytoplasm. The catalysed reaction is L-aspartate 4-semialdehyde + pyruvate = (2S,4S)-4-hydroxy-2,3,4,5-tetrahydrodipicolinate + H2O + H(+). The protein operates within amino-acid biosynthesis; L-lysine biosynthesis via DAP pathway; (S)-tetrahydrodipicolinate from L-aspartate: step 3/4. Its function is as follows. Catalyzes the condensation of (S)-aspartate-beta-semialdehyde [(S)-ASA] and pyruvate to 4-hydroxy-tetrahydrodipicolinate (HTPA). This chain is 4-hydroxy-tetrahydrodipicolinate synthase, found in Methylococcus capsulatus (strain ATCC 33009 / NCIMB 11132 / Bath).